Reading from the N-terminus, the 1984-residue chain is Sodium channel protein type 9 subunit alpha (1984 aa).

The Cytoplasmic segment spans residues Met-1 to His-125. Basic and acidic residues predominate over residues Arg-26–Pro-47. The segment at Arg-26 to Ala-55 is disordered. One copy of the I repeat lies at Phe-112 to Gln-408. Residues Ser-126–Met-145 form a helical membrane-spanning segment. At Asn-146–Glu-150 the chain is on the extracellular side. A helical transmembrane segment spans residues Trp-151–Phe-172. Residues Ala-173–Arg-185 lie on the Cytoplasmic side of the membrane. Residues Asp-186–Phe-204 traverse the membrane as a helical segment. The Extracellular segment spans residues Val-205–Val-210. Residue Asn-209 is glycosylated (N-linked (GlcNAc...) asparagine). A helical membrane pass occupies residues Ser-211–Val-227. The Cytoplasmic segment spans residues Ile-228–Ser-241. A helical membrane pass occupies residues Val-242–Phe-267. Over Met-268–Thr-344 the chain is Extracellular. A disulfide bridge links Cys-275 with Cys-322. Residue Asn-281 is glycosylated (N-linked (GlcNAc...) asparagine). Positions Phe-345–Trp-361 form an intramembrane region, pore-forming. Residues Glu-362–Lys-374 lie on the Extracellular side of the membrane. A helical transmembrane segment spans residues Thr-375–Ala-400. Residues Met-401–Phe-742 lie on the Cytoplasmic side of the membrane. A compositionally biased stretch (low complexity) spans Ser-459–Lys-469. Disordered stretches follow at residues Ser-459 to Glu-517 and Gly-563 to Leu-610. Basic residues predominate over residues Lys-472 to Lys-484. 2 stretches are compositionally biased toward basic and acidic residues: residues Ser-487–Ser-508 and Asp-571–Arg-583. The II repeat unit spans residues Cys-723–Gln-986. A helical transmembrane segment spans residues Val-743–Ala-759. The Extracellular segment spans residues Met-760 to Glu-768. The helical transmembrane segment at Phe-769 to Ile-793 threads the bilayer. The Cytoplasmic segment spans residues Ala-794–Gln-802. A helical membrane pass occupies residues Val-803–Glu-819. Residues Leu-820–Leu-828 lie on the Extracellular side of the membrane. A helical membrane pass occupies residues Ser-829–Ser-845. At Trp-846–Pro-862 the chain is on the cytoplasmic side. Residues Leu-863–Phe-885 form a helical membrane-spanning segment. Over Gly-886 to His-912 the chain is Extracellular. Cys-894 and Cys-900 are disulfide-bonded. Positions Ser-913 to Trp-925 form an intramembrane region, pore-forming. Topologically, residues Ile-926–Gly-937 are extracellular. The cysteines at positions 932 and 941 are disulfide-linked. The helical transmembrane segment at Gln-938–Leu-964 threads the bilayer. At Leu-965 to Arg-1184 the chain is on the cytoplasmic side. Residues Pro-1087–Asp-1146 are disordered. Residues Arg-1118 to Asp-1128 are compositionally biased toward polar residues. A compositionally biased stretch (acidic residues) spans Glu-1134–Asp-1146. An III repeat occupies Asn-1177–Leu-1485. A helical membrane pass occupies residues Ile-1185–Glu-1209. Residues Asp-1210–Ile-1221 lie on the Extracellular side of the membrane. Residues Ile-1222 to Tyr-1247 form a helical membrane-spanning segment. Over Lys-1248 to Thr-1249 the chain is Cytoplasmic. A helical transmembrane segment spans residues Tyr-1250–Leu-1275. At Gly-1276–Lys-1284 the chain is on the extracellular side. Residues Ser-1285–Phe-1301 traverse the membrane as a helical segment. At Glu-1302–Ala-1314 the chain is on the cytoplasmic side. Residues Ile-1315 to Leu-1339 traverse the membrane as a helical segment. At Phe-1340–Leu-1391 the chain is on the extracellular side. Cys-1347 and Cys-1367 are oxidised to a cystine. Residues Asn-1349, Asn-1363, and Asn-1372 are each glycosylated (N-linked (GlcNAc...) asparagine). Positions Arg-1392–Phe-1402 form an intramembrane region, pore-forming. Over Lys-1403–Leu-1428 the chain is Extracellular. Residues Tyr-1429–Ile-1454 traverse the membrane as a helical segment. The Cytoplasmic segment spans residues Asp-1455–Asn-1511. Ser-1487 is subject to Phosphoserine; by PKC. An IV repeat occupies Ile-1494–Gln-1792. Residues Gln-1512 to Val-1531 form a helical membrane-spanning segment. At Glu-1532–Asp-1542 the chain is on the extracellular side. A helical transmembrane segment spans residues Val-1543–Ile-1564. The Cytoplasmic portion of the chain corresponds to Ser-1565–Ile-1573. A helical transmembrane segment spans residues Gly-1574–Leu-1595. Over Ile-1596–Thr-1604 the chain is Extracellular. The chain crosses the membrane as a helical span at residues Leu-1605–Ala-1624. The Cytoplasmic segment spans residues Lys-1625 to Ser-1637. The chain crosses the membrane as a helical span at residues Leu-1638 to Met-1660. At Ser-1661 to Asn-1683 the chain is on the extracellular side. Residues Ser-1684–Gly-1696 constitute an intramembrane region (pore-forming). Topologically, residues Trp-1697–Pro-1730 are extracellular. Cys-1712 and Cys-1727 are disulfide-bonded. The chain crosses the membrane as a helical span at residues Ser-1731–Ile-1756. Topologically, residues Leu-1757–Lys-1984 are cytoplasmic. Residues Glu-1886–Lys-1915 form the IQ domain. The disordered stretch occupies residues Pro-1924–Lys-1984. A compositionally biased stretch (polar residues) spans Asn-1933–Ser-1956. Residues Thr-1958–Lys-1984 show a composition bias toward basic and acidic residues.

This sequence belongs to the sodium channel (TC 1.A.1.10) family. Nav1.7/SCN9A subfamily. The Nav1.7 voltage-gated sodium channel consists of an ion-conducting alpha subunit SCN9A which is functional on its own regulated by one or more beta-1 (SCN1B), beta-2 (SCN2B), beta-3 (SCN3B) and beta-4 (SCN4B) subunits. SCN1B and SCN3B are non-covalently associated with SCN9A. SCN2B and SCN4B are disulfide-linked to SCN9A. SCN1B regulates channel inactivation. Interacts with NEDD4 and NEDD4L; regulates Nav1.7 activity most probably through ubiquitination and subsequent endocytosis. Interacts with TMEM233; modulates the gating properties of NaV1.7. Phosphorylation at Ser-1487 by PKC in a highly conserved cytoplasmic loop increases peak sodium currents. Post-translationally, ubiquitinated by NEDD4L; which may promote its endocytosis. Expressed in the sciatic nerve, spinal cord, brainstem, cerebellum and cortex, but not expressed in the lung, skeletal and cardiac muscles, kidney and liver.

Its subcellular location is the cell membrane. The protein localises to the cell projection. The protein resides in the neuron projection. It is found in the axon. It carries out the reaction Na(+)(in) = Na(+)(out). Functionally, pore-forming subunit of Nav1.7, a voltage-gated sodium (Nav) channel that directly mediates the depolarizing phase of action potentials in excitable membranes. Navs, also called VGSCs (voltage-gated sodium channels) or VDSCs (voltage-dependent sodium channels), operate by switching between closed and open conformations depending on the voltage difference across the membrane. In the open conformation they allow Na(+) ions to selectively pass through the pore, along their electrochemical gradient. The influx of Na(+) ions provokes membrane depolarization, initiating the propagation of electrical signals throughout cells and tissues. Nav1.7 plays a crucial role in controlling the excitability and action potential propagation from nociceptor neurons, thereby contributing to the sensory perception of pain. This chain is Sodium channel protein type 9 subunit alpha, found in Oryctolagus cuniculus (Rabbit).